Here is a 704-residue protein sequence, read N- to C-terminus: D-(-)-3-hydroxybutyrate oligomer hydrolase (704 aa).

An N-terminal signal peptide occupies residues 1 to 31 (MTTTNRNNLKLTALTAAVLTLSACGGSDAVA). The active-site Charge relay system is Ser309.

The protein belongs to the D-(-)-3-hydroxybutyrate oligomer hydrolase family.

It is found in the secreted. It catalyses the reaction (3R)-hydroxybutanoate dimer + H2O = 2 (R)-3-hydroxybutanoate + H(+). It participates in lipid metabolism; butanoate metabolism. Functionally, participates in the degradation of poly-3-hydroxybutyrate (PHB). It works downstream of poly(3-hydroxybutyrate) depolymerase, hydrolyzing D(-)-3-hydroxybutyrate oligomers of various length (3HB-oligomers) into 3HB-monomers. In Albidiferax ferrireducens (strain ATCC BAA-621 / DSM 15236 / T118) (Rhodoferax ferrireducens), this protein is D-(-)-3-hydroxybutyrate oligomer hydrolase.